Reading from the N-terminus, the 409-residue chain is Nucleoprotein (409 aa).

Disordered stretches follow at residues 1 to 32, 44 to 63, 120 to 145, and 164 to 193; these read MASGKTTGKTDAPAPVIKLGGPKPPKVGSSGN, LNSPPPKFEGSGVPDNENLK, GADTKSRSNQGTRDPDKFDQYPLRFS, and RSGRSTAASSAASSRAPSRDGSRGRRSGAE. Low complexity predominate over residues 15-31; the sequence is PVIKLGGPKPPKVGSSG. Residues 29–160 form an RNA-binding region; that stretch reads SSGNASWFQA…GNFRWDFIPI (132 aa). The CoV N NTD domain occupies 31-156; the sequence is GNASWFQALK…GGPDGNFRWD (126 aa). Over residues 164–179 the composition is skewed to low complexity; sequence RSGRSTAASSAASSRA. Residues 180–192 are compositionally biased toward basic and acidic residues; sequence PSRDGSRGRRSGA. S190 is modified (phosphoserine; by host). Residues 215 to 331 enclose the CoV N CTD domain; it reads TKAKADEMAH…QCVDGVGTRP (117 aa). Positions 226–333 are dimerization; that stretch reads RYCKRTIPPG…VDGVGTRPKD (108 aa). Cysteines 320 and 323 form a disulfide. The segment at 327 to 409 is disordered; it reads VGTRPKDDEP…GESALGENEL (83 aa). The span at 341–355 shows a compositional bias: polar residues; sequence RPNSRPATRTSSPAP. Positions 368–384 are enriched in basic and acidic residues; that stretch reads KQDDEVDKALTSDEERN. Residue T378 is modified to Phosphothreonine; by host. Phosphoserine; by host is present on S379.

This sequence belongs to the gammacoronavirus nucleocapsid protein family. As to quaternary structure, homooligomer. Both monomeric and oligomeric forms interact with RNA. Interacts with protein M. Interacts with NSP3; this interaction serves to tether the genome to the newly translated replicase-transcriptase complex at a very early stage of infection. Post-translationally, ADP-ribosylated. The ADP-ribosylation is retained in the virion during infection. In terms of processing, phosphorylated on serine and threonine residues.

The protein resides in the virion. Its subcellular location is the host endoplasmic reticulum-Golgi intermediate compartment. It localises to the host Golgi apparatus. In terms of biological role, packages the positive strand viral genome RNA into a helical ribonucleocapsid (RNP) and plays a fundamental role during virion assembly through its interactions with the viral genome and membrane protein M. Plays an important role in enhancing the efficiency of subgenomic viral RNA transcription as well as viral replication. The chain is Nucleoprotein from Avian infectious bronchitis virus (strain D1466) (IBV).